Consider the following 1050-residue polypeptide: Transcription intermediary factor 1-alpha (1050 aa).

Residue lysine 7 forms a Glycyl lysine isopeptide (Lys-Gly) (interchain with G-Cter in SUMO2) linkage. Over residues 15-30 (ASAAASGGPSAAPSGE) the composition is skewed to low complexity. The disordered stretch occupies residues 15-44 (ASAAASGGPSAAPSGENEAESRQGPDSERG). Residues 33–44 (AESRQGPDSERG) show a composition bias toward basic and acidic residues. The RING-type zinc-finger motif lies at 56 to 82 (CAVCHQNIQSRAPKLLPCLHSFCQRCL). Residue threonine 101 is modified to Phosphothreonine. At serine 110 the chain carries Phosphoserine. 2 B box-type zinc fingers span residues 158-211 (KSNQ…VSPE) and 218-259 (QRPV…YQFI). Cysteine 163, cysteine 166, cysteine 187, and histidine 200 together coordinate Zn(2+). A Glycyl lysine isopeptide (Lys-Gly) (interchain with G-Cter in SUMO2) cross-link involves residue lysine 205. Cysteine 223, histidine 226, cysteine 246, and histidine 251 together coordinate Zn(2+). Lysine 276 participates in a covalent cross-link: Glycyl lysine isopeptide (Lys-Gly) (interchain with G-Cter in SUMO2). Residues 289-359 (NQIQNRIIEV…AGLSKQLEHV (71 aa)) are a coiled coil. Residues 429-456 (ESQPQMPKQNPVVEQNSQPPSGLSSNQL) form a disordered region. Residues 431-456 (QPQMPKQNPVVEQNSQPPSGLSSNQL) show a composition bias toward polar residues. Glycyl lysine isopeptide (Lys-Gly) (interchain with G-Cter in SUMO2) cross-links involve residues lysine 436 and lysine 458. At arginine 469 the chain carries Omega-N-methylarginine. 2 stretches are compositionally biased toward low complexity: residues 476 to 490 (QVMAQRQQVQRRPAP) and 499 to 510 (QGPIQQPSISHQ). A disordered region spans residues 476–550 (QVMAQRQQVQ…PPNQNIPRQA (75 aa)). Over residues 526 to 535 (PNGPVLPPHP) the composition is skewed to pro residues. Lysine 552 participates in a covalent cross-link: Glycyl lysine isopeptide (Lys-Gly) (interchain with G-Cter in SUMO2). Residues 571 to 594 (ISSGQGTPSTTNSTSSTPSSPTIT) form a disordered region. Low complexity predominate over residues 577-594 (TPSTTNSTSSTPSSPTIT). Lysine 641 is covalently cross-linked (Glycyl lysine isopeptide (Lys-Gly) (interchain with G-Cter in SUMO2)). Positions 643–712 (TNIDHGQPRP…PAGADSTHKV (70 aa)) are disordered. Serine 654, serine 660, and serine 667 each carry phosphoserine. Over residues 654 to 666 (SNRTVQSPNSSVP) the composition is skewed to polar residues. Over residues 685 to 707 (SPSASSVGSRGSSGSSSKPAGAD) the composition is skewed to low complexity. Glycyl lysine isopeptide (Lys-Gly) (interchain with G-Cter in SUMO2) cross-links involve residues lysine 702 and lysine 711. Lysine 723 is covalently cross-linked (Glycyl lysine isopeptide (Lys-Gly) (interchain with G-Cter in SUMO1); alternate). Lysine 723 participates in a covalent cross-link: Glycyl lysine isopeptide (Lys-Gly) (interchain with G-Cter in SUMO2); alternate. Lysine 741 participates in a covalent cross-link: Glycyl lysine isopeptide (Lys-Gly) (interchain with G-Cter in SUMO2). Phosphoserine is present on serine 744. Residues 754 to 779 (NYPRSILTSLLLNSSQSSTSEETVLR) are nuclear receptor binding site (NRBS). The tract at residues 766-824 (NSSQSSTSEETVLRSDAPDSTGDQPGLHQDNSSNGKSEWLDPSQKSPLHVGETRKEDDP) is disordered. Serine 768 carries the phosphoserine; by ATM modification. Lysine 801 is covalently cross-linked (Glycyl lysine isopeptide (Lys-Gly) (interchain with G-Cter in SUMO2)). Phosphoserine is present on serine 808. Lysine 810 participates in a covalent cross-link: Glycyl lysine isopeptide (Lys-Gly) (interchain with G-Cter in SUMO2). Phosphoserine is present on serine 811. Position 818 is a phosphothreonine (threonine 818). The PHD-type zinc finger occupies 826-873 (EDWCAVCQNGGELLCCEKCPKVFHLSCHVPTLTNFPSGEWICTFCRDL). The interval 834-840 (NGGELLC) is interaction with histone H3 that is not methylated at 'Lys-4' (H3K4me0). A Glycyl lysine isopeptide (Lys-Gly) (interchain with G-Cter in SUMO2) cross-link involves residue lysine 875. The Nuclear localization signal signature appears at 891–907 (KKKTEGLVKLTPIDKRK). The region spanning 899–1004 (KLTPIDKRKC…NYFEELLKNL (106 aa)) is the Bromo domain. A Glycyl lysine isopeptide (Lys-Gly) (interchain with G-Cter in SUMO2) cross-link involves residue lysine 949. The segment at 979-980 (FN) is interaction with histone H3 that is acetylated at 'Lys-23' (H3K23ac). A Glycyl lysine isopeptide (Lys-Gly) (interchain with G-Cter in SUMO2) cross-link involves residue lysine 992. The segment covering 1011-1026 (PKPEFRNESEDNKFSD) has biased composition (basic and acidic residues). Residues 1011 to 1036 (PKPEFRNESEDNKFSDDSDDDFVQPR) form a disordered region. A phosphoserine mark is found at serine 1019, serine 1025, and serine 1028. A Glycyl lysine isopeptide (Lys-Gly) (interchain with G-Cter in SUMO2) cross-link involves residue lysine 1041. Serine 1042 is subject to Phosphoserine.

In terms of assembly, interacts with CARM1, NCOA2/GRIP1, PML, KAT5/TIP60, BRD7, CBX1, CBX3 and CBX5. Part of a coactivator complex containing TRIM24, NCOA2 and CARM1. Interacts with NR3C2/MCR. Interacts with the ligand-binding domain of estrogen receptors (in vitro). Interaction with DNA-bound estrogen receptors requires the presence of estradiol. Interacts with AR and p53/TP53. Interacts (via bromo domain) with histone H3 (via N-terminus), provided that it is not methylated at 'Lys-4' (H3K4me0). Does not interact with histone H3 that is methylated at 'Lys-4' (H3K4me1, H3K4me2 or H3K4me3). Interacts (via bromo domain) with histone H3 (via N-terminus) that is acetylated at 'Lys-23' (H3K23ac). Has the highest affinity for histone H3 that is both unmodified at 'Lys-4' (H3K4me0) and acetylated at 'Lys-23' (H3K23ac). Has very low affinity for histone H3 that is methylated at 'Lys-9' (H3K9me), or acetylated at both 'Lys-9' (H3K9ac) and 'Lys-14' (H3K14ac), or acetylated at 'Lys-27' (H3K27ac) (in vitro). Interacts with TRIM16. Post-translationally, phosphorylated at Ser-768 by ATM kinase induces ubiquitination and degradation during DNA damage. Sumoylated. In terms of processing, undergoes ubiquitination-mediated degradation in response to DNA damage.

It is found in the nucleus. The protein localises to the cytoplasm. Its subcellular location is the mitochondrion. It carries out the reaction S-ubiquitinyl-[E2 ubiquitin-conjugating enzyme]-L-cysteine + [acceptor protein]-L-lysine = [E2 ubiquitin-conjugating enzyme]-L-cysteine + N(6)-ubiquitinyl-[acceptor protein]-L-lysine.. The protein operates within protein modification; protein ubiquitination. Transcriptional coactivator that interacts with numerous nuclear receptors and coactivators and modulates the transcription of target genes. Interacts with chromatin depending on histone H3 modifications, having the highest affinity for histone H3 that is both unmodified at 'Lys-4' (H3K4me0) and acetylated at 'Lys-23' (H3K23ac). Has E3 protein-ubiquitin ligase activity. During the DNA damage response, participates in an autoregulatory feedback loop with TP53. Early in response to DNA damage, ATM kinase phosphorylates TRIM24 leading to its ubiquitination and degradation. After sufficient DNA repair has occurred, TP53 activates TRIM24 transcription, ultimately leading to TRIM24-mediated TP53 ubiquitination and degradation. Plays a role in the regulation of cell proliferation and apoptosis, at least in part via its effects on p53/TP53 levels. Up-regulates ligand-dependent transcription activation by AR, GCR/NR3C1, thyroid hormone receptor (TR) and ESR1. Modulates transcription activation by retinoic acid (RA) receptors, including RARA. Plays a role in regulating retinoic acid-dependent proliferation of hepatocytes. Also participates in innate immunity by mediating the specific 'Lys-63'-linked ubiquitination of TRAF3 leading to activation of downstream signal transduction of the type I IFN pathway. Additionally, negatively regulates NLRP3/CASP1/IL-1beta-mediated pyroptosis and cell migration probably by ubiquitinating NLRP3. In Homo sapiens (Human), this protein is Transcription intermediary factor 1-alpha (TRIM24).